The primary structure comprises 217 residues: Probable glutathione S-transferase (217 aa).

The region spanning 2-81 (AEVKLLGLRY…YIDEAFEGPS (80 aa)) is the GST N-terminal domain. Residues serine 12, lysine 39, isoleucine 53, and 65–66 (ES) each bind glutathione. Residues 86-210 (DPYDRALARF…ELLIRYRAYI (125 aa)) form the GST C-terminal domain.

It belongs to the GST superfamily. HSP26 family.

The enzyme catalyses RX + glutathione = an S-substituted glutathione + a halide anion + H(+). The polypeptide is Probable glutathione S-transferase (PRP1) (Solanum tuberosum (Potato)).